The sequence spans 156 residues: E3 ubiquitin-protein ligase RNF181 (156 aa).

The segment at 79-120 (CPVCLLEFEEGETVRQLPCEHLFHSACILPWLGKTNSCPLCR) adopts an RING-type; atypical zinc-finger fold.

The protein belongs to the RNF181 family.

It catalyses the reaction S-ubiquitinyl-[E2 ubiquitin-conjugating enzyme]-L-cysteine + [acceptor protein]-L-lysine = [E2 ubiquitin-conjugating enzyme]-L-cysteine + N(6)-ubiquitinyl-[acceptor protein]-L-lysine.. It functions in the pathway protein modification; protein ubiquitination. E3 ubiquitin-protein ligase which accepts ubiquitin from an E2 ubiquitin-conjugating enzyme in the form of a thioester and then directly transfers the ubiquitin to targeted substrates. Catalyzes monoubiquitination of 26S proteasome subunit PSMC2/RPT1. The chain is E3 ubiquitin-protein ligase RNF181 (rnf181) from Xenopus laevis (African clawed frog).